A 178-amino-acid polypeptide reads, in one-letter code: Large ribosomal subunit protein uL6 (178 aa).

This sequence belongs to the universal ribosomal protein uL6 family. Part of the 50S ribosomal subunit.

Its function is as follows. This protein binds to the 23S rRNA, and is important in its secondary structure. It is located near the subunit interface in the base of the L7/L12 stalk, and near the tRNA binding site of the peptidyltransferase center. This chain is Large ribosomal subunit protein uL6, found in Wolinella succinogenes (strain ATCC 29543 / DSM 1740 / CCUG 13145 / JCM 31913 / LMG 7466 / NCTC 11488 / FDC 602W) (Vibrio succinogenes).